Here is a 1954-residue protein sequence, read N- to C-terminus: Protein abnormal spindle (1954 aa).

Residues 134-155 (VKNPRKFPTVGKTLQLKSPTGA) form a disordered region. A phosphoserine mark is found at S151 and S360. Position 364 is a phosphothreonine (T364). Phosphoserine is present on residues S388, S390, S395, S398, S491, S495, S497, S501, S504, and S514. The tract at residues 476–548 (KSVKGSPVKN…SSSAHAWPHA (73 aa)) is disordered. Polar residues predominate over residues 498-507 (DAPSNESLYR). Residues 528–548 (RSAAPANASARSSSAHAWPHA) are compositionally biased toward low complexity. In terms of domain architecture, Calponin-homology (CH) spans 836–968 (KETKDILLRF…LLWQLIYKFR (133 aa)). IQ domains follow at residues 1004 to 1033 (RHRAATVIQAVFRGHQMRKYVKLFKTERTQ), 1386 to 1415 (TQAAVSCLQMHWRNHLLRKRERNSFLQLRQ), and 1467 to 1496 (QREAIIKVQRRYRGNLEMRKQIEVYQKQRQ). Residues 1614 to 1641 (RANRSMKQARQEFVQLRTIAVHLQQKFR) are a coiled coil. IQ domains are found at residues 1656 to 1687 (LRCSMPGFQARARGFMARKRFQALMTPEMMDL) and 1690 to 1721 (QKRAAKVIQRYWRGYLIRRRQKHQGLLDIRKR).

The protein localises to the cytoplasm. The protein resides in the nucleus. It localises to the cytoskeleton. Its subcellular location is the spindle. It is found in the microtubule organizing center. The protein localises to the perinuclear region. Required to maintain the structure of the centrosomal microtubule organizing center (MTOC) during mitosis. May have a preferential role in regulating neurogenesis. Required for germ cell mitosis and oocyte differentiation. The protein is Protein abnormal spindle of Drosophila melanogaster (Fruit fly).